The chain runs to 240 residues: Triosephosphate isomerase (240 aa).

A substrate-binding site is contributed by 9 to 11 (NWK). The active-site Electrophile is the His-94. The active-site Proton acceptor is the Glu-163. Substrate is bound by residues Gly-169, Ser-202, and 223 to 224 (GG).

The protein belongs to the triosephosphate isomerase family. As to quaternary structure, homodimer.

It localises to the cytoplasm. It carries out the reaction D-glyceraldehyde 3-phosphate = dihydroxyacetone phosphate. The protein operates within carbohydrate biosynthesis; gluconeogenesis. It participates in carbohydrate degradation; glycolysis; D-glyceraldehyde 3-phosphate from glycerone phosphate: step 1/1. Involved in the gluconeogenesis. Catalyzes stereospecifically the conversion of dihydroxyacetone phosphate (DHAP) to D-glyceraldehyde-3-phosphate (G3P). In Gloeobacter violaceus (strain ATCC 29082 / PCC 7421), this protein is Triosephosphate isomerase.